Here is a 651-residue protein sequence, read N- to C-terminus: MNSSVFPRLRFACKLSLAVVLSLVLGFWFEMETPRWAALTAAIVAAGPAFVAGGDPFSGAIRHRGLLRILGTFIGCFGALVIIMTTVRAPVVMLMLCCLWAGVCVWISSLVKTENSYVFALAGYTALIIIITSQSSPRAIPQFAIERCSEIILGIVCVILADLVFSPRSVKQDVDRAIDDLLLGQYQLLQRCVGRAATDDVDSCWHGLLRKTQAIGGMRNILLMESSHWQPAWRRMKTLLSQSWMMMTLAGEIGLMRRDGDCVVKGGLLMLLEQPVTTPGDLRRQLRQLRHLAASHSSRLPAPLVGWLAASSRYQLLAAGIRTNARISQRETEILEAETPVRASSAETHHALINGLRTGVATAVGCLFWLLTGWTSGSVCMVMLGVVTALVMRLPNPLMAAKDFLIGTLIALPLGAVMFMLVLPATQQSLLLLGLCIGVMTFVIGIEIQKRRLGSLGALASTINILVLDNPMTFNLSQFLDNAIGQIIGCVLALAVIMLIRDNSRARTGRTLLNRLVHGAIDGLSTRPARCRENHLPALYQHLFLLINLFPGDMAKYRLALSLIIVHQRLRQLDIPLSDTLAECHRQMRATAARVAGAAGDTQRSRYFSQLLTQMEEYRQHLGEHQVADDIVAAVARLTALLQRHQHALCD.

11 helical membrane-spanning segments follow: residues 11–31, 41–61, 65–85, 91–111, 117–137, 150–170, 367–387, 404–424, 428–448, 454–474, and 480–500; these read FACK…WFEM, AAIV…SGAI, GLLR…IIMT, VVML…SSLV, YVFA…QSSP, EIIL…PRSV, LFWL…LGVV, FLIG…LVLP, QSLL…GIEI, GSLG…PMTF, and LDNA…IMLI.

The protein belongs to the aromatic acid exporter ArAE (TC 2.A.85) family.

It localises to the cell inner membrane. Forms an efflux pump with AaeA. Could function as a metabolic relief valve, allowing to eliminate certain compounds when they accumulate to high levels in the cell. This chain is p-hydroxybenzoic acid efflux pump subunit AaeB, found in Musicola paradisiaca (strain Ech703) (Dickeya paradisiaca).